A 208-amino-acid chain; its full sequence is Glutathione S-transferase 1-1 (208 aa).

The GST N-terminal domain maps to 1 to 80 (MDFYYLPGSA…YLVEKYGKND (80 aa)). Residues S9, 50–52 (HTI), and 64–66 (ESR) contribute to the glutathione site. In terms of domain architecture, GST C-terminal spans 86–207 (CPKKRAVINQ…EGCLEFKKFF (122 aa)).

Belongs to the GST superfamily. Theta family. Homodimer.

It catalyses the reaction RX + glutathione = an S-substituted glutathione + a halide anion + H(+). In terms of biological role, conjugation of reduced glutathione to a wide number of exogenous and endogenous hydrophobic electrophiles. The polypeptide is Glutathione S-transferase 1-1 (GST1) (Lucilia cuprina (Green bottle fly)).